Here is a 110-residue protein sequence, read N- to C-terminus: Large ribosomal subunit protein uL22 (110 aa).

Belongs to the universal ribosomal protein uL22 family. In terms of assembly, part of the 50S ribosomal subunit.

Functionally, this protein binds specifically to 23S rRNA; its binding is stimulated by other ribosomal proteins, e.g. L4, L17, and L20. It is important during the early stages of 50S assembly. It makes multiple contacts with different domains of the 23S rRNA in the assembled 50S subunit and ribosome. Its function is as follows. The globular domain of the protein is located near the polypeptide exit tunnel on the outside of the subunit, while an extended beta-hairpin is found that lines the wall of the exit tunnel in the center of the 70S ribosome. The chain is Large ribosomal subunit protein uL22 from Shewanella denitrificans (strain OS217 / ATCC BAA-1090 / DSM 15013).